A 237-amino-acid chain; its full sequence is Ribonuclease PH (237 aa).

Residues R86 and 124–126 each bind phosphate; that span reads GTR.

This sequence belongs to the RNase PH family. As to quaternary structure, homohexameric ring arranged as a trimer of dimers.

It catalyses the reaction tRNA(n+1) + phosphate = tRNA(n) + a ribonucleoside 5'-diphosphate. Phosphorolytic 3'-5' exoribonuclease that plays an important role in tRNA 3'-end maturation. Removes nucleotide residues following the 3'-CCA terminus of tRNAs; can also add nucleotides to the ends of RNA molecules by using nucleoside diphosphates as substrates, but this may not be physiologically important. Probably plays a role in initiation of 16S rRNA degradation (leading to ribosome degradation) during starvation. The polypeptide is Ribonuclease PH (Rhodopseudomonas palustris (strain ATCC BAA-98 / CGA009)).